Reading from the N-terminus, the 95-residue chain is UPF0235 protein Adeh_1087 (95 aa).

The protein belongs to the UPF0235 family.

The chain is UPF0235 protein Adeh_1087 from Anaeromyxobacter dehalogenans (strain 2CP-C).